The sequence spans 77 residues: Omega-conotoxin-like SO-5 (77 aa).

An N-terminal signal peptide occupies residues 1–22 (MKLTCVMIVAVLLLTACQLITA). A propeptide spanning residues 23-42 (DDSRGTQKHRSLRSTTKVSK) is cleaved from the precursor. Cystine bridges form between cysteine 46–cysteine 61, cysteine 53–cysteine 64, and cysteine 60–cysteine 71.

The protein belongs to the conotoxin O1 superfamily. In terms of tissue distribution, expressed by the venom duct.

It is found in the secreted. In terms of biological role, omega-conotoxins act at presynaptic membranes, they bind and block voltage-gated calcium channels (Cav). The protein is Omega-conotoxin-like SO-5 (SO5) of Conus striatus (Striated cone).